Here is a 363-residue protein sequence, read N- to C-terminus: Pyruvate dehydrogenase E1 component subunit alpha, mitochondrial (363 aa).

Residues 1–2 (RN) constitute a mitochondrion transit peptide. Lys-36 bears the N6-acetyllysine; alternate mark. Lys-36 is subject to N6-succinyllysine; alternate. Pyruvate-binding residues include His-65, Tyr-91, Arg-92, Ala-130, Gly-138, Val-140, Asp-169, Gly-170, Ala-171, Asn-198, and Tyr-200. The thiamine diphosphate site is built by Tyr-91 and Arg-92. 6 residues coordinate thiamine diphosphate: Gly-138, Val-140, Asp-169, Gly-170, Ala-171, and Asn-198. Residue Asp-169 participates in Mg(2+) binding. 2 residues coordinate Mg(2+): Asn-198 and Tyr-200. Position 205 is a phosphoserine; by PDK1 (Ser-205). The residue at position 217 (Lys-217) is an N6-acetyllysine; alternate. The residue at position 217 (Lys-217) is an N6-succinyllysine; alternate. Lys-240 is subject to N6-acetyllysine. Lys-250 is subject to N6-succinyllysine. His-265 serves as a coordination point for thiamine diphosphate. Ser-266 is subject to Phosphoserine; by PDK1, PDK2, PDK3 and PDK4. A Phosphoserine modification is found at Ser-268. At Ser-273 the chain carries Phosphoserine; by PDK1, PDK2, PDK3 and PDK4. Tyr-274 is modified (phosphotyrosine). Position 286 is an N6-acetyllysine; alternate (Lys-286). An N6-succinyllysine; alternate modification is found at Lys-286. 2 positions are modified to N6-acetyllysine: Lys-294 and Lys-309. Lys-358 carries the N6-succinyllysine modification.

As to quaternary structure, heterotetramer of two PDHA1 and two PDHB subunits. The heterotetramer interacts with DLAT, and is part of the multimeric pyruvate dehydrogenase complex that contains multiple copies of pyruvate dehydrogenase (E1), dihydrolipoamide acetyltransferase (DLAT, E2) and lipoamide dehydrogenase (DLD, E3). These subunits are bound to an inner core composed of about 48 DLAT and 12 PDHX molecules. Thiamine diphosphate is required as a cofactor. It depends on Mg(2+) as a cofactor. Phosphorylation at Ser-205, Ser-266 and Ser-273 by PDK family kinases inactivates the enzyme; for this phosphorylation at a single site is sufficient. Phosphorylation at Ser-266 interferes with access to active site, and thereby inactivates the enzyme. Dephosphorylation at all three sites, i.e. at Ser-205, Ser-266 and Ser-273, is required for reactivation. Post-translationally, acetylation alters the phosphorylation pattern. Deacetylated by SIRT3.

Its subcellular location is the mitochondrion matrix. It carries out the reaction N(6)-[(R)-lipoyl]-L-lysyl-[protein] + pyruvate + H(+) = N(6)-[(R)-S(8)-acetyldihydrolipoyl]-L-lysyl-[protein] + CO2. Its activity is regulated as follows. Pyruvate dehydrogenase activity is inhibited by phosphorylation of PDHA1; it is reactivated by dephosphorylation. The pyruvate dehydrogenase complex catalyzes the overall conversion of pyruvate to acetyl-CoA and CO(2), and thereby links the glycolytic pathway to the tricarboxylic cycle. This Sminthopsis macroura (Stripe-faced dunnart) protein is Pyruvate dehydrogenase E1 component subunit alpha, mitochondrial (PDHA).